We begin with the raw amino-acid sequence, 266 residues long: Inositol-1-monophosphatase (266 aa).

Residues Glu69, Asp86, Leu88, and Asp89 each contribute to the Mg(2+) site. Glu69 is a binding site for substrate. Residues 88–91 (LDGT), Arg185, and Asp214 each bind substrate. Residue Asp214 participates in Mg(2+) binding.

The protein belongs to the inositol monophosphatase superfamily. Requires Mg(2+) as cofactor.

It catalyses the reaction a myo-inositol phosphate + H2O = myo-inositol + phosphate. The protein is Inositol-1-monophosphatase (suhB) of Mesorhizobium japonicum (strain LMG 29417 / CECT 9101 / MAFF 303099) (Mesorhizobium loti (strain MAFF 303099)).